A 645-amino-acid chain; its full sequence is UPF0313 protein CLK_3381 (645 aa).

In terms of domain architecture, Radical SAM core spans 295–566 (AIKEVKFSIT…RMQRALLQFS (272 aa)). 3 residues coordinate [4Fe-4S] cluster: C309, C313, and C316. The disordered stretch occupies residues 598–645 (NKPYKKSHKKNNVKNNNNHYNKNNNYNKNKDVSKKNKKNSLSKHKKRK). Residues 600-609 (PYKKSHKKNN) are compositionally biased toward basic residues. The segment covering 610 to 624 (VKNNNNHYNKNNNYN) has biased composition (low complexity). Over residues 632–645 (KNKKNSLSKHKKRK) the composition is skewed to basic residues.

The protein belongs to the UPF0313 family. It depends on [4Fe-4S] cluster as a cofactor.

This Clostridium botulinum (strain Loch Maree / Type A3) protein is UPF0313 protein CLK_3381.